A 292-amino-acid polypeptide reads, in one-letter code: MTLQHTRRIVKSLFILFIIVVCIYLLPRVAINAFYYPDNKVYGPTPAEAESITFTAKDGTHLHGWFIPTAFGRPENAVATVIHVHGNAGNMSAHWPLVSWLPERNVNLFMFDYRGFGESEGTPSQEGLLNDTKSAIDYVRHRADVNPERLVLLGQSLGGNNVLAAVGHCVGCANMRYADQAGIRAIVLDSTFSSYSSIANQMIPGSGYLLDDRYSADRNIASVSPIPVLILHGTADHVIPWQDSEKLYALAREPKQKIFIPDGDHIDAFSGRYANLYRDAMINFIQTALSAK.

Residues L13 to Y35 traverse the membrane as a helical segment.

The protein belongs to the serine esterase family.

Its subcellular location is the membrane. This is an uncharacterized protein from Salmonella typhi.